Here is a 560-residue protein sequence, read N- to C-terminus: Cilia- and flagella-associated protein 184 (560 aa).

Residues 1 to 12 are compositionally biased toward basic and acidic residues; it reads MEGGSEHTKDPG. Positions 1–209 are disordered; the sequence is MEGGSEHTKD…QEEGKPLGGR (209 aa). 2 stretches are compositionally biased toward acidic residues: residues 41 to 61 and 101 to 110; these read GELESEPEEEEEEEEEEEEEA and EPEEPAEAGA. Basic and acidic residues-rich tracts occupy residues 127 to 144 and 179 to 209; these read AEARAEELEQAAEGKEVR and ETRRDGAESEGRAGEGRPAKSQEEGKPLGGR. Coiled coils occupy residues 357–481 and 510–536; these read QAAL…QGRD and DSLLRDLEEKVDKTQLLHQRLESLKRH.

Belongs to the CFAP184 family. In terms of assembly, forms a complex with CFAP263; the interaction is required for functional activity in cilia.

The protein resides in the cell projection. It localises to the cilium. Its subcellular location is the cytoplasm. It is found in the cytoskeleton. The protein localises to the microtubule organizing center. The protein resides in the centrosome. In terms of biological role, in complex with CFAP263, acts as a regulator of ciliary beating that connects radial spoke 3 (RS3) to the inner dynein arm (IDA) and the nexin-dynein regulatory complex (N-DRC). The complex is positioned parallel to N-DRC and forms a connection between the arch at the base of RS3, the IDA tail and N-DRC. The polypeptide is Cilia- and flagella-associated protein 184 (CFAP184) (Macaca fascicularis (Crab-eating macaque)).